Reading from the N-terminus, the 628-residue chain is UvrABC system protein C (628 aa).

The region spanning 21-100 (TGPGIYQFKN…IKELKPRYNV (80 aa)) is the GIY-YIG domain. Positions 214 to 249 (AGLLKELHEKMLTAAAELRFEEAAELKMQLQSLRRY) constitute a UVR domain.

The protein belongs to the UvrC family. In terms of assembly, interacts with UvrB in an incision complex.

The protein resides in the cytoplasm. In terms of biological role, the UvrABC repair system catalyzes the recognition and processing of DNA lesions. UvrC both incises the 5' and 3' sides of the lesion. The N-terminal half is responsible for the 3' incision and the C-terminal half is responsible for the 5' incision. In Chlorobium luteolum (strain DSM 273 / BCRC 81028 / 2530) (Pelodictyon luteolum), this protein is UvrABC system protein C.